Consider the following 219-residue polypeptide: Large ribosomal subunit protein uL16 (219 aa).

It belongs to the universal ribosomal protein uL16 family. Component of the small ribosomal subunit. Mature ribosomes consist of a small (40S) and a large (60S) subunit. The 40S subunit contains about 33 different proteins and 1 molecule of RNA (18S). The 60S subunit contains about 49 different proteins and 3 molecules of RNA (25S, 5.8S and 5S).

This Solanum melongena (Eggplant) protein is Large ribosomal subunit protein uL16 (RPL10).